Consider the following 192-residue polypeptide: 21.7 kDa class VI heat shock protein (192 aa).

The sHSP domain maps to 80–192 (SLRSLGQCRV…IPKINSKNKF (113 aa)).

Belongs to the small heat shock protein (HSP20) family. In terms of assembly, may form oligomeric structures.

Its subcellular location is the cytoplasm. This is 21.7 kDa class VI heat shock protein (HSP21.7) from Arabidopsis thaliana (Mouse-ear cress).